The chain runs to 131 residues: Large ribosomal subunit protein bL19 (131 aa).

Residues 110 to 131 (KSARIAERTDDRAKKAKATAAE) form a disordered region. Basic and acidic residues predominate over residues 113–122 (RIAERTDDRA).

It belongs to the bacterial ribosomal protein bL19 family.

Its function is as follows. This protein is located at the 30S-50S ribosomal subunit interface and may play a role in the structure and function of the aminoacyl-tRNA binding site. This is Large ribosomal subunit protein bL19 from Azorhizobium caulinodans (strain ATCC 43989 / DSM 5975 / JCM 20966 / LMG 6465 / NBRC 14845 / NCIMB 13405 / ORS 571).